We begin with the raw amino-acid sequence, 434 residues long: Serine hydroxymethyltransferase (434 aa).

120–122 contacts (6S)-5,6,7,8-tetrahydrofolate; that stretch reads GHI. At lysine 236 the chain carries N6-(pyridoxal phosphate)lysine. Glutamate 255 is a binding site for (6S)-5,6,7,8-tetrahydrofolate.

The protein belongs to the SHMT family. As to quaternary structure, homodimer. The cofactor is pyridoxal 5'-phosphate.

It is found in the cytoplasm. It participates in amino-acid biosynthesis; glycine biosynthesis; glycine from L-serine: step 1/1. Its function is as follows. Catalyzes the reversible interconversion of serine and glycine with a modified folate serving as the one-carbon carrier. Also exhibits a pteridine-independent aldolase activity toward beta-hydroxyamino acids, producing glycine and aldehydes, via a retro-aldol mechanism. The polypeptide is Serine hydroxymethyltransferase (Korarchaeum cryptofilum (strain OPF8)).